Reading from the N-terminus, the 349-residue chain is GTPase Obg (349 aa).

Residues 1–159 (MKFLDQAKVY…LWIWLRLKLI (159 aa)) form the Obg domain. The 168-residue stretch at 160-327 (ADAGLIGLPN…VLRALMRVVQ (168 aa)) folds into the OBG-type G domain. Residues 166 to 173 (GLPNAGKS), 191 to 195 (FTTLH), 212 to 215 (DIPG), 279 to 282 (SQID), and 308 to 310 (SSA) contribute to the GTP site. The Mg(2+) site is built by S173 and T193.

It belongs to the TRAFAC class OBG-HflX-like GTPase superfamily. OBG GTPase family. As to quaternary structure, monomer. The cofactor is Mg(2+).

Its subcellular location is the cytoplasm. An essential GTPase which binds GTP, GDP and possibly (p)ppGpp with moderate affinity, with high nucleotide exchange rates and a fairly low GTP hydrolysis rate. Plays a role in control of the cell cycle, stress response, ribosome biogenesis and in those bacteria that undergo differentiation, in morphogenesis control. The protein is GTPase Obg of Chelativorans sp. (strain BNC1).